A 264-amino-acid chain; its full sequence is Membrane-spanning 4-domains subfamily A member 10 (264 aa).

Topologically, residues 1–57 are cytoplasmic; sequence MKAEATVIPSRCARGQTTAAPGVQPWQTSVPQNTTQPKLLAPRQHEKSQKRSSLLKE. A compositionally biased stretch (polar residues) spans 17–37; it reads TTAAPGVQPWQTSVPQNTTQP. Residues 17-48 are disordered; that stretch reads TTAAPGVQPWQTSVPQNTTQPKLLAPRQHEKS. Residues 58 to 78 form a helical membrane-spanning segment; the sequence is LGAFHITIALLHLVFGGYLAS. Topologically, residues 79–89 are extracellular; sequence TVKSLHLVVLK. The chain crosses the membrane as a helical span at residues 90–110; it reads SWYPFWGAASFLISGILAITM. The Cytoplasmic portion of the chain corresponds to 111–119; sequence KTFSKTYLK. A helical membrane pass occupies residues 120–140; it reads MLCLMTNLVSLFCVLSGLFVI. Residues 141 to 169 lie on the Extracellular side of the membrane; that stretch reads SKDLFLESPFESPIWRMYPNSTVHIQRLE. A helical membrane pass occupies residues 170–190; that stretch reads LALLCFTVLELFLPVPTAVTA. The Cytoplasmic segment spans residues 191-264; it reads WRDRPSAKND…GAGIWTQTAN (74 aa).

This sequence belongs to the MS4A family.

It is found in the membrane. Its function is as follows. May be involved in signal transduction as a component of a multimeric receptor complex. In Pongo abelii (Sumatran orangutan), this protein is Membrane-spanning 4-domains subfamily A member 10 (MS4A10).